The following is a 309-amino-acid chain: Xylose/arabinose import permease protein XacI (309 aa).

6 consecutive transmembrane segments (helical) span residues 29–49 (LVVF…MTAI), 89–109 (LIMS…AAYG), 121–141 (MLML…VPLA), 170–190 (ELVP…TILF), 227–247 (MFGV…LFAF), and 282–302 (AAFL…EQFA). In terms of domain architecture, ABC transmembrane type-1 spans 85–297 (FFNSLIMSIP…VPTLILYVAF (213 aa)).

This sequence belongs to the binding-protein-dependent transport system permease family. In terms of assembly, the complex is composed of two ATP-binding proteins (XacJ and XacK), two transmembrane proteins (XacH and XacI) and a solute-binding protein (XacG).

Its subcellular location is the cell membrane. Functionally, part of the ABC transporter complex XacGHIJK involved in the uptake of xylose and arabinose. Responsible for the translocation of the substrate across the membrane. The sequence is that of Xylose/arabinose import permease protein XacI from Haloferax volcanii (strain ATCC 29605 / DSM 3757 / JCM 8879 / NBRC 14742 / NCIMB 2012 / VKM B-1768 / DS2) (Halobacterium volcanii).